The following is a 129-amino-acid chain: L-ectoine synthase (129 aa).

This sequence belongs to the ectoine synthase family.

It carries out the reaction (2S)-4-acetamido-2-aminobutanoate = L-ectoine + H2O. It participates in amine and polyamine biosynthesis; ectoine biosynthesis; L-ectoine from L-aspartate 4-semialdehyde: step 3/3. Its function is as follows. Catalyzes the circularization of gamma-N-acetyl-alpha,gamma-diaminobutyric acid (ADABA) to ectoine (1,4,5,6-tetrahydro-2-methyl-4-pyrimidine carboxylic acid), which is an excellent osmoprotectant. In Halalkalibacterium halodurans (strain ATCC BAA-125 / DSM 18197 / FERM 7344 / JCM 9153 / C-125) (Bacillus halodurans), this protein is L-ectoine synthase.